A 156-amino-acid chain; its full sequence is ATP synthase subunit b (156 aa).

A helical transmembrane segment spans residues 7-29 (LLGQAISFLLFVWFCMKFVWPPL).

This sequence belongs to the ATPase B chain family. In terms of assembly, F-type ATPases have 2 components, F(1) - the catalytic core - and F(0) - the membrane proton channel. F(1) has five subunits: alpha(3), beta(3), gamma(1), delta(1), epsilon(1). F(0) has three main subunits: a(1), b(2) and c(10-14). The alpha and beta chains form an alternating ring which encloses part of the gamma chain. F(1) is attached to F(0) by a central stalk formed by the gamma and epsilon chains, while a peripheral stalk is formed by the delta and b chains.

The protein localises to the cell inner membrane. Its function is as follows. F(1)F(0) ATP synthase produces ATP from ADP in the presence of a proton or sodium gradient. F-type ATPases consist of two structural domains, F(1) containing the extramembraneous catalytic core and F(0) containing the membrane proton channel, linked together by a central stalk and a peripheral stalk. During catalysis, ATP synthesis in the catalytic domain of F(1) is coupled via a rotary mechanism of the central stalk subunits to proton translocation. Component of the F(0) channel, it forms part of the peripheral stalk, linking F(1) to F(0). This Shewanella halifaxensis (strain HAW-EB4) protein is ATP synthase subunit b.